The following is a 124-amino-acid chain: Glycine cleavage system H protein (124 aa).

Positions 19–101 (VATVGITNHA…EGEGWLFKME (83 aa)) constitute a Lipoyl-binding domain. An N6-lipoyllysine modification is found at lysine 60.

It belongs to the GcvH family. As to quaternary structure, the glycine cleavage system is composed of four proteins: P, T, L and H. The cofactor is (R)-lipoate.

Functionally, the glycine cleavage system catalyzes the degradation of glycine. The H protein shuttles the methylamine group of glycine from the P protein to the T protein. This is Glycine cleavage system H protein from Thermotoga maritima (strain ATCC 43589 / DSM 3109 / JCM 10099 / NBRC 100826 / MSB8).